Consider the following 296-residue polypeptide: D-alanine--D-alanine ligase (296 aa).

In terms of domain architecture, ATP-grasp spans 103-293; sequence KEILMHHRMP…FDSFVKRIIE (191 aa). 129–180 is a binding site for ATP; it reads ISFPVAVKPSSGGSSIATFKVKSIQELKHAYEEASKYGEVMIEQWVTGKEIT. Residues D247, E260, and N262 each coordinate Mg(2+).

It belongs to the D-alanine--D-alanine ligase family. The cofactor is Mg(2+). It depends on Mn(2+) as a cofactor.

The protein resides in the cytoplasm. It catalyses the reaction 2 D-alanine + ATP = D-alanyl-D-alanine + ADP + phosphate + H(+). It participates in cell wall biogenesis; peptidoglycan biosynthesis. Functionally, cell wall formation. This chain is D-alanine--D-alanine ligase, found in Francisella tularensis subsp. novicida (strain U112).